The sequence spans 113 residues: Large ribosomal subunit protein uL22 (113 aa).

It belongs to the universal ribosomal protein uL22 family. As to quaternary structure, part of the 50S ribosomal subunit.

Its function is as follows. This protein binds specifically to 23S rRNA; its binding is stimulated by other ribosomal proteins, e.g. L4, L17, and L20. It is important during the early stages of 50S assembly. It makes multiple contacts with different domains of the 23S rRNA in the assembled 50S subunit and ribosome. In terms of biological role, the globular domain of the protein is located near the polypeptide exit tunnel on the outside of the subunit, while an extended beta-hairpin is found that lines the wall of the exit tunnel in the center of the 70S ribosome. The polypeptide is Large ribosomal subunit protein uL22 (Xanthomonas oryzae pv. oryzae (strain MAFF 311018)).